The following is a 102-amino-acid chain: Thioredoxin (102 aa).

The 102-residue stretch at 1–102 (MVQVVSQENF…SLIKLISKHQ (102 aa)) folds into the Thioredoxin domain. Cysteines 28 and 31 form a disulfide.

This sequence belongs to the thioredoxin family.

Its function is as follows. Participates in various redox reactions through the reversible oxidation of its active center dithiol to a disulfide and catalyzes dithiol-disulfide exchange reactions. The chain is Thioredoxin (trxA) from Chlamydia trachomatis serovar D (strain ATCC VR-885 / DSM 19411 / UW-3/Cx).